A 32-amino-acid polypeptide reads, in one-letter code: Photosystem II reaction center protein T (32 aa).

Residues 3-23 (ALVYTFLLIGTLVVIFFAIFF) form a helical membrane-spanning segment.

The protein belongs to the PsbT family. PSII is composed of 1 copy each of membrane proteins PsbA, PsbB, PsbC, PsbD, PsbE, PsbF, PsbH, PsbI, PsbJ, PsbK, PsbL, PsbM, PsbT, PsbX, PsbY, PsbZ, Psb30/Ycf12, at least 3 peripheral proteins of the oxygen-evolving complex and a large number of cofactors. It forms dimeric complexes.

The protein localises to the plastid. The protein resides in the chloroplast thylakoid membrane. Its function is as follows. Found at the monomer-monomer interface of the photosystem II (PS II) dimer, plays a role in assembly and dimerization of PSII. PSII is a light-driven water plastoquinone oxidoreductase, using light energy to abstract electrons from H(2)O, generating a proton gradient subsequently used for ATP formation. The chain is Photosystem II reaction center protein T from Emiliania huxleyi (Coccolithophore).